The following is a 447-amino-acid chain: MTTILKHLPVGQRIGIAFSGGLDTSAALLWMRQKGAVPYAYTANLGQPDEEDYDAIPRRAMEYGAENARLIDCRKQLVAEGIAAIQCGAFHNTTGGLTYFNTTPLGRAVTGTMLVAAMKEDGVNIWGDGSTYKGNDIERFYRYGLLTNAELQIYKPWLDTDFIDELGGRHEMSEFMIACGFDYKMSVEKAYSTDSNMLGATHEAKDLEYLNSSVKIVNPIMGVKFWDESVKIPAEEVTVRFEQGHPVALNGKTFSDDVEMMLEANRIGGRHGLGMSDQIENRIIEAKSRGIYEAPGMALLHIAYERLLTGIHNEDTIEQYHAHGRQLGRLLYQGRWFDSQALMLRDSLQRWVASQITGEVTLELRRGNDYSILNTVSENLTYKPERLTMEKGDSVFSPDDRIGQLTMRNLDITDTREKLFGYAKTGLLSSSATSGVPQVENLENKGQ.

Residues 17-25 and Ala43 each bind ATP; that span reads AFSGGLDTS. Tyr99 lines the L-citrulline pocket. Residues Gly129 and Thr131 each coordinate ATP. The L-aspartate site is built by Thr131, Asn135, and Asp136. Asn135 is an L-citrulline binding site. Asp136 is an ATP binding site. L-citrulline-binding residues include Arg139 and Ser192. Position 194 (Asp194) interacts with ATP. Positions 201, 203, and 280 each coordinate L-citrulline.

The protein belongs to the argininosuccinate synthase family. Type 2 subfamily. As to quaternary structure, homotetramer.

The protein localises to the cytoplasm. It carries out the reaction L-citrulline + L-aspartate + ATP = 2-(N(omega)-L-arginino)succinate + AMP + diphosphate + H(+). It participates in amino-acid biosynthesis; L-arginine biosynthesis; L-arginine from L-ornithine and carbamoyl phosphate: step 2/3. The protein is Argininosuccinate synthase of Escherichia coli O8 (strain IAI1).